The primary structure comprises 630 residues: MHTKIHLPPCILLLLLFSLPSFNVVVGGDGESGNPFTPKGYLIRYWKKQISNDLPKPWFLLNKASPLNAAQYATYTKLVADQNALTTQLHTFCSSANLMCAPDLSPSLEKHSGDIHFATYSDKNFTNYGTNEPGIGVNTFKNYSEGENIPVNSFRRYGRGSPRDNKFDNYASDGNVIDQSFNSYSTSTAGGSGKFTNYAANANDPNLHFTSYSDQGTGGVQKFTIYSQEANAGDQYFKSYGKNGNGANGEFVSYGNDTNVIGSTFTNYGQTANGGDQKFTSYGFNGNVPENHFTNYGAGGNGPSETFNSYRDQSNVGDDTFTTYVKDANGGEANFTNYGQSFNEGTDVFTTYGKGGNDPHINFKTYGVNNTFKDYVKDTATFSNYHNKTSQVLASLMEVNGGKKVNNRWVEPGKFFREKMLKSGTIMPMPDIKDKMPKRSFLPRVIASKLPFSTSKIAELKKIFHAGDESQVEKMIGDALSECERAPSAGETKRCVNSAEDMIDFATSVLGRNVVVRTTEDTKGSNGNIMIGSVKGINGGKVTKSVSCHQTLYPYLLYYCHSVPKVRVYEADILDPNSKVKINHGVAICHVDTSSWGPSHGAFVALGSGPGKIEVCHWIFENDMTWAIAD.

Residues 1 to 27 form the signal peptide; sequence MHTKIHLPPCILLLLLFSLPSFNVVVG. Residues 28-108 constitute a propeptide that is removed on maturation; it reads GDGESGNPFT…MCAPDLSPSL (81 aa). Residues asparagine 124, asparagine 142, asparagine 256, asparagine 334, asparagine 369, and asparagine 387 are each glycosylated (N-linked (GlcNAc...) asparagine). A propeptide spanning residues 398 to 630 is cleaved from the precursor; the sequence is EVNGGKKVNN…ENDMTWAIAD (233 aa). The 215-residue stretch at 415-629 folds into the BURP domain; sequence FFREKMLKSG…FENDMTWAIA (215 aa).

In terms of assembly, interacts with polygalacturonase-2 (isoenzymes PG2A and PG2B) to form heterodimers called polygalacturonase-1 (PG1). As to expression, mostly expressed in fruit pericarp. Also detected at low levels in cell wall of roots, leaves and flowers (at protein level).

Its subcellular location is the secreted. It is found in the extracellular space. The protein localises to the apoplast. It localises to the cell wall. Functionally, non-catalytic subunit of the polygalacturonase isozyme 1 (PG1). Necessary and sufficient to convert the polygalacturonase from its monomeric form PG2 to its heterodimeric form PG1. Seems to limit the depolymerization and solubilization of cell wall polyuronides mediated by PG2 during ripening, probably by recruiting PG2 to form PG1. The chain is Polygalacturonase-1 non-catalytic subunit beta (GP1) from Solanum lycopersicum (Tomato).